A 282-amino-acid chain; its full sequence is Elongation factor Ts (282 aa).

An involved in Mg(2+) ion dislocation from EF-Tu region spans residues 80 to 83; the sequence is TDFV.

Belongs to the EF-Ts family.

It is found in the cytoplasm. Functionally, associates with the EF-Tu.GDP complex and induces the exchange of GDP to GTP. It remains bound to the aminoacyl-tRNA.EF-Tu.GTP complex up to the GTP hydrolysis stage on the ribosome. In Chlamydia pneumoniae (Chlamydophila pneumoniae), this protein is Elongation factor Ts (tsf).